A 204-amino-acid chain; its full sequence is Ras-related protein Rab-7L1 (204 aa).

Ser33, Lys34, His35, Tyr36, Lys37, and Thr39 together coordinate GTP. Positions 36–44 (YKSTVGVDF) match the Effector region motif. At Thr71 the chain carries Phosphothreonine; by LRRK2. Phosphoserine is present on Ser72. GTP-binding residues include Lys126, Val156, and Lys157. 2 S-geranylgeranyl cysteine lipidation sites follow: Cys203 and Cys204.

Belongs to the small GTPase superfamily. Rab family. As to quaternary structure, interacts with LRRK2 (via the N-terminus); this interaction is direct and stimulates kinase activity.

It is found in the cell membrane. The protein resides in the cytoplasm. It localises to the perinuclear region. Its subcellular location is the golgi apparatus. The protein localises to the golgi apparatus membrane. It is found in the trans-Golgi network. The protein resides in the cytoskeleton. Functionally, the small GTPases Rab are key regulators in vesicle trafficking. Essential for maintaining the integrity of endosome-trans-Golgi network structure. Together with LRRK2, plays a role in the retrograde trafficking pathway for recycling proteins, such as mannose 6 phosphate receptor (M6PR), between lysosomes and the Golgi apparatus in a retromer-dependent manner. Recruits LRRK2 to the Golgi apparatus and stimulates LRRK2 kinase activity. Stimulates phosphorylation of RAB10 'Thr-73' by LRRK2. Also regulates neuronal process morphology in the intact central nervous system (CNS). The sequence is that of Ras-related protein Rab-7L1 (Rab29) from Mus musculus (Mouse).